The following is a 938-amino-acid chain: Scm-like with four MBT domains protein 2 (938 aa).

Residues 1–32 (MERYLPVSKKRNSSSSLEKITGSANGNGTLYS) form a disordered region. The span at 13-30 (SSSSLEKITGSANGNGTL) shows a compositional bias: polar residues. MBT repeat units follow at residues 43–143 (FSWG…LRPP), 151–255 (SDWT…MDPP), 265–371 (FEWK…LAPP), and 379–475 (FNWV…LTTP). The segment at 742 to 836 (PEGIPESLPE…TVPTTASSNN (95 aa)) is disordered. Composition is skewed to basic and acidic residues over residues 765-777 (TEQE…DTAR) and 809-822 (RNSE…VERA). In terms of domain architecture, SAM spans 868–931 (WSVTDVVRFI…CHQIERVKVA (64 aa)).

Interacts with YY1. Interacts with methylated histones H3K9me2 and H4K20me2. As to expression, expressed in testis and, at much lower levels, in ovary.

Its subcellular location is the nucleus. Transcriptional repressor of HOXB13 gene. The polypeptide is Scm-like with four MBT domains protein 2 (Sfmbt2) (Mus musculus (Mouse)).